Here is a 171-residue protein sequence, read N- to C-terminus: MEQDNSPRKIQFTVPLLEPHLDPEAAEQIRRRRPTPATLVLTSDQSSPEIDEDRIPNPHLKSTLAMSPRQRKKMTRITPTMKELQMMVEHHLGQQQQGEEPEGAAESTGTQESRPPGIPDTEVESRLGTSGTAKKTAECIPKTHERGSKEPSTKEPSTHIPPLDSKGANSV.

Met-1 carries the post-translational modification N-acetylmethionine. A disordered region spans residues 1-171 (MEQDNSPRKI…PLDSKGANSV (171 aa)). Residues 9–12 (KIQF) form an essential for activity region. The span at 19 to 29 (PHLDPEAAEQI) shows a compositional bias: basic and acidic residues. The residue at position 35 (Thr-35) is a Phosphothreonine; by PKA. The segment at 42-54 (TSDQSSPEIDEDR) is essential for activity. A phosphoserine mark is found at Ser-43, Ser-46, Ser-47, and Ser-67. Residues 135-157 (KTAECIPKTHERGSKEPSTKEPS) show a composition bias toward basic and acidic residues. The tract at residues 143-171 (THERGSKEPSTKEPSTHIPPLDSKGANSV) is interaction with PPP1R15A.

The protein belongs to the protein phosphatase inhibitor 1 family. Interacts with PPP1R15A. Phosphorylation of Thr-35 is required for activity.

Inhibitor of protein-phosphatase 1. This protein may be important in hormonal control of glycogen metabolism. Hormones that elevate intracellular cAMP increase I-1 activity in many tissues. I-1 activation may impose cAMP control over proteins that are not directly phosphorylated by PKA. Following a rise in intracellular calcium, I-1 is inactivated by calcineurin (or PP2B). Does not inhibit type-2 phosphatases. This is Protein phosphatase 1 regulatory subunit 1A (PPP1R1A) from Homo sapiens (Human).